Consider the following 717-residue polypeptide: MLLNPDQILNLVRKVYEVDIKQFYSQLRLKNLRGLLDHAAHLFNVYLRDLEINQEMEALTAFIIGCYYLYLIIPQSLQFQTRNNLYSSYAKLKNDYQDEHVMGYVLKVVRDESTVIVDRYLAESNGICRTIKRKRAYSLPLRPLPVHMASLSIHNKFDGSLHEIPNELTKPTNDNSKEDIVRESNQIASSNKLEAGSEVAYYTSKEALSKPSYLKLSTGKDALFKTLSSPATAPPVHSLEVSSQIRDSSQDSSSSLSKVEKPKEEEGKIEAIESSAPKAYNLPVIEDSNDLLSELSITGLQNPCNTCYINSIIQCLFGTTLFRDLFLTKKYRLFLNTNKYPKEVQLSRSIYVLFKKMYLNGGRAIIPNRFLKMCKKLRPDLNIPDDQQDTQEFLLIVLARIHEELSNENVVKYYPDLVSYDANALQVNPSKYEKWYERNVITDGLSPIDHIYRGQLENILKCQRCGNSSYSYSTFYVLSLAIPKLSLYSFTSKSRKIKLEDCINLFTGDEELSGDNAWDCPNCRITDSKSKKEEITSQKKKSTIFGFHSRSRSKSPHHHHHHHHSSDDSTKNAKKRNSKKLTTIKSLDFIVLPPILVIHLSRFYYDLTKKNSTVITYPLILNIILKNGKVIRYKLYGTVNHSGNLINGHYTSVVNKEKSHEIGLNRQVWVTFDDDYIQQHRKDRNNFEAGKTEMSSDEVYVLFYERMDEENYEEEFC.

Residues 231–268 (ATAPPVHSLEVSSQIRDSSQDSSSSLSKVEKPKEEEGK) are disordered. Residues 242-257 (SSQIRDSSQDSSSSLS) show a composition bias toward low complexity. Positions 258–268 (KVEKPKEEEGK) are enriched in basic and acidic residues. The region spanning 298-707 (TGLQNPCNTC…EVYVLFYERM (410 aa)) is the USP domain. Cys-307 acts as the Nucleophile in catalysis. The segment at 531–577 (KKEEITSQKKKSTIFGFHSRSRSKSPHHHHHHHHSSDDSTKNAKKRN) is disordered. Basic residues predominate over residues 549 to 564 (SRSRSKSPHHHHHHHH). His-649 acts as the Proton acceptor in catalysis.

This sequence belongs to the peptidase C19 family.

It carries out the reaction Thiol-dependent hydrolysis of ester, thioester, amide, peptide and isopeptide bonds formed by the C-terminal Gly of ubiquitin (a 76-residue protein attached to proteins as an intracellular targeting signal).. The chain is Ubiquitin carboxyl-terminal hydrolase 11 (UBP11) from Saccharomyces cerevisiae (strain ATCC 204508 / S288c) (Baker's yeast).